A 237-amino-acid polypeptide reads, in one-letter code: Octanoyltransferase (237 aa).

A BPL/LPL catalytic domain is found at S27–G210. Substrate contacts are provided by residues R72–H79, S139–G141, and G152–A154. C170 functions as the Acyl-thioester intermediate in the catalytic mechanism.

It belongs to the LipB family.

The protein resides in the cytoplasm. It catalyses the reaction octanoyl-[ACP] + L-lysyl-[protein] = N(6)-octanoyl-L-lysyl-[protein] + holo-[ACP] + H(+). It functions in the pathway protein modification; protein lipoylation via endogenous pathway; protein N(6)-(lipoyl)lysine from octanoyl-[acyl-carrier-protein]: step 1/2. In terms of biological role, catalyzes the transfer of endogenously produced octanoic acid from octanoyl-acyl-carrier-protein onto the lipoyl domains of lipoate-dependent enzymes. Lipoyl-ACP can also act as a substrate although octanoyl-ACP is likely to be the physiological substrate. This is Octanoyltransferase from Desulfovibrio desulfuricans (strain ATCC 27774 / DSM 6949 / MB).